We begin with the raw amino-acid sequence, 163 residues long: Bacterial microcompartment assembly protein PduM (163 aa).

This sequence belongs to the PduM family. Interacts with shell protein PduK.

The protein localises to the bacterial microcompartment. Its pathway is polyol metabolism; 1,2-propanediol degradation. In terms of biological role, plays an essential role in assembly and/or stability of the bacterial microcompartment (BMC) dedicated to 1,2-propanediol (1,2-PD) degradation. Its function is as follows. Expression of a cosmid containing the full 21-gene pdu operon in E.coli allows E.coli to grow on 1,2-propanediol (1,2-PD) with the appearance of bacterial microcompartments (BMC) in its cytoplasm. The 1,2-PD-specific bacterial microcompartment (BMC) concentrates low levels of 1,2-PD catabolic enzymes, concentrates volatile reaction intermediates thus enhancing pathway flux and keeps the level of toxic, mutagenic propionaldehyde low. This is Bacterial microcompartment assembly protein PduM from Citrobacter freundii.